Consider the following 2005-residue polypeptide: Chitin synthase 8 (2005 aa).

The Myosin motor domain occupies 5–773; it reads DEVAKLSQLT…AFRELEDELR (769 aa). An ATP-binding site is contributed by 108-115; sequence GDTSSGKS. Asparagine 164, asparagine 364, asparagine 390, and asparagine 546 each carry an N-linked (GlcNAc...) asparagine glycan. The tract at residues 585 to 631 is disordered; that stretch reads QSVKPMRAPSTRRPNRGNTIKRTNTIKKADDDDSDEDAADAADASTS. Residues 615–624 show a composition bias toward acidic residues; sequence DDDSDEDAAD. The interval 647-669 is actin-binding; that stretch reads LDLLLETLEDTKTWFTLCLRPND. The next 2 helical transmembrane spans lie at 929–949 and 965–985; these read KWVALTWAITFWIPSFILSRF and LAINLIIWFICACAVFVIVVL. N-linked (GlcNAc...) asparagine glycosylation occurs at asparagine 1076. 3 helical membrane-spanning segments follow: residues 1232 to 1252, 1604 to 1624, and 1626 to 1646; these read ILLALSLFMVAILGFKFLAAL, LIFTPGLCGFCLFSMRFIVFI, and LLSTIIAPVTVCYIVYLIVLV. N-linked (GlcNAc...) asparagine glycosylation occurs at asparagine 1650. 2 helical membrane-spanning segments follow: residues 1653-1673 and 1680-1700; these read VPLTAIIMLAAIYGCQAVIFL and MIGWMIVYIIGIPIWSLFLPL. N-linked (GlcNAc...) asparagine glycosylation is found at asparagine 1770 and asparagine 1794. Residues 1796–1821 are disordered; sequence SFGHSPSPSYGGTPSQFGAFAPGPGS. A compositionally biased stretch (polar residues) spans 1797 to 1811; it reads FGHSPSPSYGGTPSQ. N-linked (GlcNAc...) asparagine glycosylation is present at asparagine 1882. A disordered region spans residues 1912 to 1950; that stretch reads FATAEQQQQQQQQQQAAGLSGSGGSKSPPREAVAGGLPS. A compositionally biased stretch (low complexity) spans 1917 to 1930; that stretch reads QQQQQQQQQQAAGL. Residues 1948 to 2003 enclose the DEK-C domain; that stretch reads LPSDSQIKLDIRSLIAESDLTTITKKQLRAKLEQKYATSIESKKAFINSEIENVLS.

This sequence in the N-terminal section; belongs to the TRAFAC class myosin-kinesin ATPase superfamily. Myosin family. It in the C-terminal section; belongs to the chitin synthase family. Class V subfamily.

Its subcellular location is the cell membrane. It is found in the cytoplasmic vesicle membrane. The protein localises to the cell tip. The enzyme catalyses [(1-&gt;4)-N-acetyl-beta-D-glucosaminyl](n) + UDP-N-acetyl-alpha-D-glucosamine = [(1-&gt;4)-N-acetyl-beta-D-glucosaminyl](n+1) + UDP + H(+). Polymerizes chitin, a structural polymer of the cell wall and septum, by transferring the sugar moiety of UDP-GlcNAc to the non-reducing end of the growing chitin polymer. Involved in mating tube and dikaryotic hyphae formation and required for the formation of invading hyphae during plant infection. The protein is Chitin synthase 8 of Mycosarcoma maydis (Corn smut fungus).